The primary structure comprises 612 residues: Zinc metalloproteinase-disintegrin-like 2a (612 aa).

Residues 1 to 20 form the signal peptide; that stretch reads MIQVLLVTICLAVFPYQGSS. Positions 21–189 are excised as a propeptide; the sequence is IILGSGNVND…KKASQLNLTP (169 aa). A Peptidase M12B domain is found at 199 to 395; sequence KYIELVIVAD…NRPPCILNKP (197 aa). Glutamate 202 lines the Ca(2+) pocket. Asparagine 218 carries N-linked (GlcNAc...) asparagine glycosylation. Aspartate 286 serves as a coordination point for Ca(2+). Intrachain disulfides connect cysteine 310–cysteine 390, cysteine 350–cysteine 374, and cysteine 352–cysteine 357. Position 335 (histidine 335) interacts with Zn(2+). The active site involves glutamate 336. Zn(2+)-binding residues include histidine 339 and histidine 345. Residues cysteine 390, asparagine 393, valine 405, asparagine 408, phenylalanine 410, glutamate 412, glutamate 415, and aspartate 418 each contribute to the Ca(2+) site. Positions 403–489 constitute a Disintegrin domain; sequence PPVCGNYFVE…DCPTDNFQRN (87 aa). 14 cysteine pairs are disulfide-bonded: cysteine 406–cysteine 435, cysteine 417–cysteine 430, cysteine 419–cysteine 425, cysteine 429–cysteine 452, cysteine 443–cysteine 449, cysteine 448–cysteine 474, cysteine 461–cysteine 481, cysteine 468–cysteine 500, cysteine 493–cysteine 505, cysteine 512–cysteine 562, cysteine 527–cysteine 573, cysteine 540–cysteine 550, cysteine 557–cysteine 599, and cysteine 593–cysteine 605. The D/ECD-tripeptide signature appears at 467 to 469; it reads ECD.

It belongs to the venom metalloproteinase (M12B) family. P-III subfamily. Zn(2+) serves as cofactor. As to expression, expressed by the venom gland.

It is found in the secreted. Its function is as follows. Snake venom metalloproteinase that impairs hemostasis in the envenomed animal. The chain is Zinc metalloproteinase-disintegrin-like 2a from Crotalus adamanteus (Eastern diamondback rattlesnake).